The following is a 592-amino-acid chain: V-type ATP synthase alpha chain (592 aa).

232–239 contributes to the ATP binding site; sequence GPFGSGKT.

This sequence belongs to the ATPase alpha/beta chains family.

The enzyme catalyses ATP + H2O + 4 H(+)(in) = ADP + phosphate + 5 H(+)(out). Its function is as follows. Produces ATP from ADP in the presence of a proton gradient across the membrane. The V-type alpha chain is a catalytic subunit. In Clostridioides difficile (strain 630) (Peptoclostridium difficile), this protein is V-type ATP synthase alpha chain.